Reading from the N-terminus, the 268-residue chain is Imidazole glycerol phosphate synthase subunit HisF (268 aa).

Active-site residues include Asp-12 and Asp-131.

It belongs to the HisA/HisF family. Heterodimer of HisH and HisF.

The protein resides in the cytoplasm. It carries out the reaction 5-[(5-phospho-1-deoxy-D-ribulos-1-ylimino)methylamino]-1-(5-phospho-beta-D-ribosyl)imidazole-4-carboxamide + L-glutamine = D-erythro-1-(imidazol-4-yl)glycerol 3-phosphate + 5-amino-1-(5-phospho-beta-D-ribosyl)imidazole-4-carboxamide + L-glutamate + H(+). The protein operates within amino-acid biosynthesis; L-histidine biosynthesis; L-histidine from 5-phospho-alpha-D-ribose 1-diphosphate: step 5/9. Its function is as follows. IGPS catalyzes the conversion of PRFAR and glutamine to IGP, AICAR and glutamate. The HisF subunit catalyzes the cyclization activity that produces IGP and AICAR from PRFAR using the ammonia provided by the HisH subunit. The sequence is that of Imidazole glycerol phosphate synthase subunit HisF from Methanosphaerula palustris (strain ATCC BAA-1556 / DSM 19958 / E1-9c).